The following is a 681-amino-acid chain: Potassium-transporting ATPase ATP-binding subunit (681 aa).

4 helical membrane passes run L30–I50, L59–A79, I216–T236, and I255–I275. The active-site 4-aspartylphosphate intermediate is the D306. ATP contacts are provided by residues D343, E347, F376 to S383, and K394. The Mg(2+) site is built by D517 and D521. Helical transmembrane passes span F587–M607, A615–L635, and L661–V681.

The protein belongs to the cation transport ATPase (P-type) (TC 3.A.3) family. Type IA subfamily. The system is composed of three essential subunits: KdpA, KdpB and KdpC.

It localises to the cell membrane. It carries out the reaction K(+)(out) + ATP + H2O = K(+)(in) + ADP + phosphate + H(+). Its function is as follows. Part of the high-affinity ATP-driven potassium transport (or Kdp) system, which catalyzes the hydrolysis of ATP coupled with the electrogenic transport of potassium into the cytoplasm. This subunit is responsible for energy coupling to the transport system and for the release of the potassium ions to the cytoplasm. This Listeria monocytogenes serotype 4b (strain CLIP80459) protein is Potassium-transporting ATPase ATP-binding subunit.